Reading from the N-terminus, the 238-residue chain is 2-C-methyl-D-erythritol 4-phosphate cytidylyltransferase (238 aa).

The protein belongs to the IspD/TarI cytidylyltransferase family. IspD subfamily.

The enzyme catalyses 2-C-methyl-D-erythritol 4-phosphate + CTP + H(+) = 4-CDP-2-C-methyl-D-erythritol + diphosphate. The protein operates within isoprenoid biosynthesis; isopentenyl diphosphate biosynthesis via DXP pathway; isopentenyl diphosphate from 1-deoxy-D-xylulose 5-phosphate: step 2/6. Functionally, catalyzes the formation of 4-diphosphocytidyl-2-C-methyl-D-erythritol from CTP and 2-C-methyl-D-erythritol 4-phosphate (MEP). This Salinibacter ruber (strain DSM 13855 / M31) protein is 2-C-methyl-D-erythritol 4-phosphate cytidylyltransferase.